The following is an 893-amino-acid chain: Translation initiation factor IF-2 (893 aa).

2 disordered regions span residues 51–203 (KEHG…AEAE) and 216–300 (EENE…SMQH). Basic and acidic residues-rich tracts occupy residues 102–203 (ALEE…AEAE), 216–238 (EENE…DADY), and 245–261 (HARE…EQQP). Residues 392–561 (GRAPVVTIMG…LLQSEVLELT (170 aa)) enclose the tr-type G domain. The segment at 401-408 (GHVDHGKT) is G1. A GTP-binding site is contributed by 401–408 (GHVDHGKT). The interval 426–430 (GITQH) is G2. Residues 447-450 (DTPG) are G3. GTP contacts are provided by residues 447–451 (DTPGH) and 501–504 (NKID). The tract at residues 501–504 (NKID) is G4. The G5 stretch occupies residues 537–539 (SAK).

The protein belongs to the TRAFAC class translation factor GTPase superfamily. Classic translation factor GTPase family. IF-2 subfamily.

The protein localises to the cytoplasm. In terms of biological role, one of the essential components for the initiation of protein synthesis. Protects formylmethionyl-tRNA from spontaneous hydrolysis and promotes its binding to the 30S ribosomal subunits. Also involved in the hydrolysis of GTP during the formation of the 70S ribosomal complex. The protein is Translation initiation factor IF-2 of Aliivibrio fischeri (strain MJ11) (Vibrio fischeri).